We begin with the raw amino-acid sequence, 401 residues long: MVSRTKNRRNKARKVVSRSTALVPMAPASQRTGPAPRKPRKRNQALVRNPRLTDAGLAFLKCAFAAPDFSVDPGKGIPDNFHGRTLAIKDCNTTSVVFTPNTDTYIVVAPVPGFAYFRAEVAVGAQPTTFVGVPYPTYATNFGAGSQNGLPAVNNYSKFRYASMACGLYPTSNMMQFSGSVQVWRVDLNLSEAVNPAVTAITPAPGVFANFVDKRINGLRGIRPLAPRDNYSGNFIDGAYTFAFDKSTDFEWCDFVRSLEFSESNVLGAATAMKLLAPGGGTDTTLTGLGNVNTLVYKISTPTGAVNTAILRTWNCIELQPYTDSALFQFSGVSPPFDPLALECYHNLKMRFPVAVSSRENSKFWEGVLRVLNQISGTLSVIPGPVGTISAGVHQLTGMYM.

The span at methionine 1 to valine 16 shows a compositional bias: basic residues. Positions methionine 1–asparagine 43 are disordered. An intrachain disulfide couples cysteine 62 to cysteine 316. Aspartate 68 is an active-site residue. Residues aspartate 249, glutamate 251, and alanine 272 each coordinate Ca(2+).

It belongs to the peptidase A6 family. Post-translationally, capsid protein alpha autocatalytically maturates into capsid protein beta and peptide gamma.

Its subcellular location is the virion. The enzyme catalyses Hydrolysis of an asparaginyl bond involved in the maturation of the structural protein of the virus, typically -Asn-|-Ala- or -Asn-|-Phe-.. Functionally, capsid protein alpha self-assembles to form an icosahedral procapsid with a T=3 symmetry, about 30 nm in diameter, and consisting of 60 capsid proteins trimers. In addition, 240 calcium ions are incorporated per capsid during assembly. The capsid encapsulates the two genomic RNAs. Capsid maturation occurs via autoproteolytic cleavage of capsid protein alpha generating capsid protein beta and the membrane-active peptide gamma. Its function is as follows. Membrane-permeabilizing peptide produced by virus maturation, thereby creating the infectious virion. After endocytosis into the host cell, peptide gamma is probably exposed in endosomes, where it permeabilizes the endosomal membrane, facilitating translocation of viral capsid or RNA into the cytoplasm. Involved in specific recognition and packaging of viral RNA during assembly. In Spodoptera eridania (Southern armyworm), this protein is Capsid protein alpha (alpha).